Consider the following 237-residue polypeptide: RNA chaperone ProQ (237 aa).

Residues 106-188 (AKARVQAQRA…QPRPVPVTDI (83 aa)) form a disordered region. A compositionally biased stretch (basic and acidic residues) spans 146–158 (PRREAGAAPENRK).

This sequence belongs to the ProQ family.

Its subcellular location is the cytoplasm. In terms of biological role, RNA chaperone with significant RNA binding, RNA strand exchange and RNA duplexing activities. May regulate ProP activity through an RNA-based, post-transcriptional mechanism. This Yersinia pseudotuberculosis serotype O:1b (strain IP 31758) protein is RNA chaperone ProQ.